Here is a 357-residue protein sequence, read N- to C-terminus: Alanine racemase (357 aa).

Lys-35 acts as the Proton acceptor; specific for D-alanine in catalysis. At Lys-35 the chain carries N6-(pyridoxal phosphate)lysine. A substrate-binding site is contributed by Arg-130. Tyr-255 (proton acceptor; specific for L-alanine) is an active-site residue. Residue Met-303 participates in substrate binding.

This sequence belongs to the alanine racemase family. Requires pyridoxal 5'-phosphate as cofactor.

The catalysed reaction is L-alanine = D-alanine. Its pathway is amino-acid biosynthesis; D-alanine biosynthesis; D-alanine from L-alanine: step 1/1. In terms of biological role, catalyzes the interconversion of L-alanine and D-alanine. May also act on other amino acids. This is Alanine racemase (alr) from Nitrosospira multiformis (strain ATCC 25196 / NCIMB 11849 / C 71).